A 1003-amino-acid polypeptide reads, in one-letter code: Retinoblastoma-related protein 1 (1003 aa).

A domain A region spans residues 405-607 (TPVSTAMTTA…EKGSSMYNSL (203 aa)). Positions 405 to 860 (TPVSTAMTTA…NEMFIPSVKP (456 aa)) are pocket. Residues 608-729 (AVAKPSLAAE…PGGGGETCAE (122 aa)) form a spacer region. Residues 730–860 (TAINVFFGKI…NEMFIPSVKP (131 aa)) form a domain B region. Residues 868 to 899 (AGNNSEKNDHNDGQGPASPKPSPFPKLPDMSP) form a disordered region.

This sequence belongs to the retinoblastoma protein (RB) family. Expressed in roots, stems, leaves and flowers.

The protein localises to the nucleus. Its function is as follows. Regulator of biological processes that recruits a histone deacetylase to control gene transcription. Formation of stable complexes with geminiviridae replication-associated proteins may create a cellular environment which favors viral DNA replication. May play a role in the entry into mitosis, negatively regulating the cell proliferation during leaf, stem, and flower development. Critical regulator of the endocycle. The polypeptide is Retinoblastoma-related protein 1 (RBR1) (Nicotiana benthamiana).